A 221-amino-acid chain; its full sequence is Transmembrane emp24 domain-containing protein 3 (221 aa).

An N-terminal signal peptide occupies residues 1 to 25; the sequence is MVHEAPHASSFQMLLQLLLLLLLRA. At 28–184 the chain is on the lumenal side; the sequence is LRSAELTFEL…RAEDLNSRVS (157 aa). Residues 42–124 enclose the GOLD domain; the sequence is KQCFHEEVEQ…HKTVYFDFQV (83 aa). R103 carries the dimethylated arginine modification. A helical membrane pass occupies residues 185–205; the sequence is YWSVGETIALFVVSFSQVLLL. Residues 206 to 221 are Cytoplasmic-facing; that stretch reads KSFFTEKRPVNRAVHS. The COPII vesicle coat-binding signature appears at 208 to 209; that stretch reads FF. The COPI vesicle coat-binding signature appears at 208–221; the sequence is FFTEKRPVNRAVHS.

It belongs to the EMP24/GP25L family. Monomer in endoplasmic reticulum, endoplasmic reticulum-Golgi intermediate compartment and cis-Golgi network. Interacts (via C-terminus) with COPG1; the interaction involves dimeric TMED3; however, there are conflicting reports on the interaction. Interacts with GORASP1 and GORASP2.

It is found in the endoplasmic reticulum-Golgi intermediate compartment membrane. It localises to the golgi apparatus. Its subcellular location is the cis-Golgi network membrane. The protein resides in the golgi stack membrane. The protein localises to the endoplasmic reticulum membrane. It is found in the cytoplasmic vesicle. It localises to the COPI-coated vesicle membrane. In terms of biological role, potential role in vesicular protein trafficking, mainly in the early secretory pathway. Contributes to the coupled localization of TMED2 and TMED10 in the cis-Golgi network. This Mus musculus (Mouse) protein is Transmembrane emp24 domain-containing protein 3 (Tmed3).